A 387-amino-acid chain; its full sequence is Queuine tRNA-ribosyltransferase (387 aa).

Asp102 functions as the Proton acceptor in the catalytic mechanism. Residues 102–106, Asp156, Gln205, and Gly232 each bind substrate; that span reads DSGGF. Residues 263-269 are RNA binding; that stretch reads GVGTPED. The active-site Nucleophile is the Asp282. Residues 287–291 are RNA binding; important for wobble base 34 recognition; sequence TRNAR. The Zn(2+) site is built by Cys320, Cys322, Cys325, and His351.

It belongs to the queuine tRNA-ribosyltransferase family. As to quaternary structure, homodimer. Within each dimer, one monomer is responsible for RNA recognition and catalysis, while the other monomer binds to the replacement base PreQ1. Requires Zn(2+) as cofactor.

It carries out the reaction 7-aminomethyl-7-carbaguanine + guanosine(34) in tRNA = 7-aminomethyl-7-carbaguanosine(34) in tRNA + guanine. It participates in tRNA modification; tRNA-queuosine biosynthesis. Its function is as follows. Catalyzes the base-exchange of a guanine (G) residue with the queuine precursor 7-aminomethyl-7-deazaguanine (PreQ1) at position 34 (anticodon wobble position) in tRNAs with GU(N) anticodons (tRNA-Asp, -Asn, -His and -Tyr). Catalysis occurs through a double-displacement mechanism. The nucleophile active site attacks the C1' of nucleotide 34 to detach the guanine base from the RNA, forming a covalent enzyme-RNA intermediate. The proton acceptor active site deprotonates the incoming PreQ1, allowing a nucleophilic attack on the C1' of the ribose to form the product. After dissociation, two additional enzymatic reactions on the tRNA convert PreQ1 to queuine (Q), resulting in the hypermodified nucleoside queuosine (7-(((4,5-cis-dihydroxy-2-cyclopenten-1-yl)amino)methyl)-7-deazaguanosine). The chain is Queuine tRNA-ribosyltransferase from Polaromonas naphthalenivorans (strain CJ2).